The following is a 259-amino-acid chain: uncharacterized protein (259 aa).

A signal peptide spans 1-28 (MNIKRRLKYLTSCLLVSAFFWINSSAWA). Transmembrane regions (helical) follow at residues 32-52 (EIPP…IYVA) and 191-211 (WGFL…GIFT).

The protein resides in the cell membrane. This is an uncharacterized protein from Coxiella burnetii (strain RSA 493 / Nine Mile phase I).